We begin with the raw amino-acid sequence, 521 residues long: Cholesterol side-chain cleavage enzyme, mitochondrial (521 aa).

A mitochondrion-targeting transit peptide spans 1 to 39 (MLAKGLPPRSVLVKGCQTFLSAPKERLGHLRVPTSEGAG). C462 contacts heme.

It belongs to the cytochrome P450 family. As to quaternary structure, interacts with FDX1/adrenodoxin. Heme is required as a cofactor.

Its subcellular location is the mitochondrion inner membrane. It carries out the reaction 6 reduced [adrenodoxin] + cholesterol + 3 O2 + 6 H(+) = 4-methylpentanal + pregnenolone + 6 oxidized [adrenodoxin] + 4 H2O. The catalysed reaction is 2 reduced [adrenodoxin] + cholesterol + O2 + 2 H(+) = (22R)-hydroxycholesterol + 2 oxidized [adrenodoxin] + H2O. The enzyme catalyses (22R)-hydroxycholesterol + 2 reduced [adrenodoxin] + O2 + 2 H(+) = (20R,22R)-20,22-dihydroxycholesterol + 2 oxidized [adrenodoxin] + H2O. It catalyses the reaction (20R,22R)-20,22-dihydroxycholesterol + 2 reduced [adrenodoxin] + O2 + 2 H(+) = 4-methylpentanal + pregnenolone + 2 oxidized [adrenodoxin] + 2 H2O. It functions in the pathway lipid metabolism; C21-steroid hormone metabolism. Its pathway is steroid metabolism; cholesterol metabolism. In terms of biological role, a cytochrome P450 monooxygenase that catalyzes the side-chain hydroxylation and cleavage of cholesterol to pregnenolone, the precursor of most steroid hormones. Catalyzes three sequential oxidation reactions of cholesterol, namely the hydroxylation at C22 followed with the hydroxylation at C20 to yield 20R,22R-hydroxycholesterol that is further cleaved between C20 and C22 to yield the C21-steroid pregnenolone and 4-methylpentanal. Mechanistically, uses molecular oxygen inserting one oxygen atom into a substrate and reducing the second into a water molecule. Two electrons are provided by NADPH via a two-protein mitochondrial transfer system comprising flavoprotein FDXR (adrenodoxin/ferredoxin reductase) and nonheme iron-sulfur protein FDX1 or FDX2 (adrenodoxin/ferredoxin). The polypeptide is Cholesterol side-chain cleavage enzyme, mitochondrial (CYP11A1) (Macaca fascicularis (Crab-eating macaque)).